We begin with the raw amino-acid sequence, 409 residues long: Serine/threonine transporter SstT (409 aa).

9 helical membrane-spanning segments follow: residues 17–37 (LVVQ…FFPA), 49–69 (FVSA…MASI), 83–103 (ILLL…IASF), 142–162 (ALIS…GIAF), 180–200 (VSLI…GLVA), 218–238 (LVVL…LIVF), 299–319 (MAGA…TLGI), 331–351 (VVAS…LLLI), and 357–377 (LFGI…IIAI).

This sequence belongs to the dicarboxylate/amino acid:cation symporter (DAACS) (TC 2.A.23) family.

The protein localises to the cell inner membrane. The catalysed reaction is L-serine(in) + Na(+)(in) = L-serine(out) + Na(+)(out). It carries out the reaction L-threonine(in) + Na(+)(in) = L-threonine(out) + Na(+)(out). Involved in the import of serine and threonine into the cell, with the concomitant import of sodium (symport system). The polypeptide is Serine/threonine transporter SstT (Pseudomonas paraeruginosa (strain DSM 24068 / PA7) (Pseudomonas aeruginosa (strain PA7))).